A 197-amino-acid polypeptide reads, in one-letter code: Probable GTP-binding protein EngB (197 aa).

An EngB-type G domain is found at Gly22 to Gly195. GTP contacts are provided by residues Gly30–Ser37, Gly57–Thr61, Asp75–Gly78, Thr142–Asp145, and Phe174–Ala176. Ser37 and Thr59 together coordinate Mg(2+).

It belongs to the TRAFAC class TrmE-Era-EngA-EngB-Septin-like GTPase superfamily. EngB GTPase family. Mg(2+) is required as a cofactor.

Necessary for normal cell division and for the maintenance of normal septation. This Levilactobacillus brevis (strain ATCC 367 / BCRC 12310 / CIP 105137 / JCM 1170 / LMG 11437 / NCIMB 947 / NCTC 947) (Lactobacillus brevis) protein is Probable GTP-binding protein EngB.